A 61-amino-acid chain; its full sequence is Translational regulator CsrA (61 aa).

The protein belongs to the CsrA/RsmA family. In terms of assembly, homodimer; the beta-strands of each monomer intercalate to form a hydrophobic core, while the alpha-helices form wings that extend away from the core.

The protein resides in the cytoplasm. A key translational regulator that binds mRNA to regulate translation initiation and/or mRNA stability. Mediates global changes in gene expression, shifting from rapid growth to stress survival by linking envelope stress, the stringent response and the catabolite repression systems. Usually binds in the 5'-UTR; binding at or near the Shine-Dalgarno sequence prevents ribosome-binding, repressing translation, binding elsewhere in the 5'-UTR can activate translation and/or stabilize the mRNA. Its function is antagonized by small RNA(s). In Glaesserella parasuis serovar 5 (strain SH0165) (Haemophilus parasuis), this protein is Translational regulator CsrA.